The following is a 260-amino-acid chain: Thiazole synthase (260 aa).

Lysine 96 (schiff-base intermediate with DXP) is an active-site residue. 1-deoxy-D-xylulose 5-phosphate-binding positions include glycine 157, 184–185 (AG), and 206–207 (NT).

This sequence belongs to the ThiG family. In terms of assembly, homotetramer. Forms heterodimers with either ThiH or ThiS.

It localises to the cytoplasm. The enzyme catalyses [ThiS sulfur-carrier protein]-C-terminal-Gly-aminoethanethioate + 2-iminoacetate + 1-deoxy-D-xylulose 5-phosphate = [ThiS sulfur-carrier protein]-C-terminal Gly-Gly + 2-[(2R,5Z)-2-carboxy-4-methylthiazol-5(2H)-ylidene]ethyl phosphate + 2 H2O + H(+). It functions in the pathway cofactor biosynthesis; thiamine diphosphate biosynthesis. In terms of biological role, catalyzes the rearrangement of 1-deoxy-D-xylulose 5-phosphate (DXP) to produce the thiazole phosphate moiety of thiamine. Sulfur is provided by the thiocarboxylate moiety of the carrier protein ThiS. In vitro, sulfur can be provided by H(2)S. This chain is Thiazole synthase, found in Nitrobacter winogradskyi (strain ATCC 25391 / DSM 10237 / CIP 104748 / NCIMB 11846 / Nb-255).